Consider the following 2548-residue polypeptide: Variant-silencing SET domain-containing protein (2548 aa).

Over residues 37-48 (IDDDDDDDNDNN) the composition is skewed to acidic residues. 3 disordered regions span residues 37–61 (IDDDDDDDNDNNEEPKEMNINKTNN), 336–379 (GDPK…DDDN), and 585–629 (SVDR…NTQT). Over residues 336-357 (GDPKKRIERNKQEIEDHRREQD) the composition is skewed to basic and acidic residues. Residues 358-378 (GENDQEEDNYDDYDDEDDDDD) show a composition bias toward acidic residues. A compositionally biased stretch (low complexity) spans 602-616 (NGSNNNNSSSNNNNN). A compositionally biased stretch (polar residues) spans 617-629 (ITHITNDCDNTQT). Residues 787–846 (FYLCEFCEQNIFDMNNMIKKDKAKECMYRCNISCGRTFHKACVCYIKNNDNYICFFCLYD) form a PHD-type 1 zinc finger. A compositionally biased stretch (basic residues) spans 929–944 (IKRRHIYRKRRRRGPR). Disordered stretches follow at residues 929 to 1054 (IKRR…CDEN), 1546 to 1575 (EKNTKNKLCNNDNNNNNNNKGKNTKYNTLD), 1713 to 1732 (EQGSINNAKHNEQGSINNAK), and 1772 to 1822 (INNA…DDHR). Residues 986–1016 (DNNDDNNDNNDDNNDNNDDNNDNNDNNDDNN) are compositionally biased toward acidic residues. Composition is skewed to low complexity over residues 1017–1050 (NDNNNNNNNDNNDNNNNNNNNNNNNDNDNNNNNN) and 1551–1572 (NKLCNNDNNNNNNNKGKNTKYN). The segment covering 1714 to 1732 (QGSINNAKHNEQGSINNAK) has biased composition (polar residues). Residues 2067–2117 (SDDYKCLCQGECNLYTCYNSLSNIQCSKSRCNLPEKIQDRKCFNRPFRKSF) enclose the AWS domain. Residues 2119–2240 (KDLEIKKTEK…SGEEITYNYS (122 aa)) enclose the SET domain. Y2239 serves as a coordination point for S-adenosyl-L-methionine. A PHD-type 2 zinc finger spans residues 2423–2471 (DEVCRKCKSCGNLTMCDKCFQSYHQLCGNMHSKMYKNNELVLCRFCQKY).

Belongs to the class V-like SAM-binding methyltransferase superfamily.

It is found in the nucleus. The protein localises to the chromosome. The catalysed reaction is L-lysyl(36)-[histone H3] + 3 S-adenosyl-L-methionine = N(6),N(6),N(6)-trimethyl-L-lysyl(36)-[histone H3] + 3 S-adenosyl-L-homocysteine + 3 H(+). Histone methyltransferase that specifically represses expression of the surface antigen-coding var genes by mediating trimethylation of 'Lys-36' of histone H3 (H3K36me3) on var genes. SETVS-dependent H3K36me3 is specifically involved in var genes silencing, a central step malaria pathogenesis: each parasite contains 60 distinct var genes that each code for a different PfEMP1 protein. During infection, the clonal parasite population expresses only 1 gene at a time, while the 59 other var genes are silenced. The parasite then switches to the expression of a new variant antigen as an immune-evasion mechanism to avoid the host antibody response. Represses expression of both var mRNA and antisense long non-coding RNA. This chain is Variant-silencing SET domain-containing protein (SETVS), found in Plasmodium falciparum (isolate 3D7).